Reading from the N-terminus, the 314-residue chain is L-lactate dehydrogenase 1 (314 aa).

NAD(+) contacts are provided by residues Val16, Asp37, Lys42, Tyr68, and 82–83; that span reads GL. Substrate is bound by residues Gln85, Arg91, and 123 to 126; that span reads NPVD. NAD(+) contacts are provided by residues 121 to 123 and Ser146; that span reads ATN. 151-154 contributes to the substrate binding site; sequence DSAR. Residues Arg156 and His171 each coordinate beta-D-fructose 1,6-bisphosphate. The active-site Proton acceptor is the His178. Position 223 is a phosphotyrosine (Tyr223). Thr232 provides a ligand contact to substrate.

Belongs to the LDH/MDH superfamily. LDH family. Homotetramer.

Its subcellular location is the cytoplasm. The enzyme catalyses (S)-lactate + NAD(+) = pyruvate + NADH + H(+). The protein operates within fermentation; pyruvate fermentation to lactate; (S)-lactate from pyruvate: step 1/1. Its activity is regulated as follows. Allosterically activated by fructose 1,6-bisphosphate (FBP). Functionally, catalyzes the conversion of lactate to pyruvate. In Bacillus cereus (strain ATCC 14579 / DSM 31 / CCUG 7414 / JCM 2152 / NBRC 15305 / NCIMB 9373 / NCTC 2599 / NRRL B-3711), this protein is L-lactate dehydrogenase 1.